A 311-amino-acid chain; its full sequence is Putative S-adenosyl-L-methionine-dependent methyltransferase MRA_0152 (311 aa).

S-adenosyl-L-methionine-binding positions include Asp-135 and 164–165; that span reads DL.

The protein belongs to the UPF0677 family.

Its function is as follows. Exhibits S-adenosyl-L-methionine-dependent methyltransferase activity. This is Putative S-adenosyl-L-methionine-dependent methyltransferase MRA_0152 from Mycobacterium tuberculosis (strain ATCC 25177 / H37Ra).